The chain runs to 584 residues: uncharacterized protein (584 aa).

3 disordered regions span residues 123–156 (LSCS…PSSP), 209–264 (KIVT…INGG), and 355–479 (STQL…ITPT). 2 stretches are compositionally biased toward low complexity: residues 237–260 (SLSF…PKSS) and 366–376 (SISAATTTTIT). Composition is skewed to polar residues over residues 377–388 (PHNNNSTMTTKT) and 395–419 (DTSN…STTP). Low complexity predominate over residues 425–479 (MSMTPLSSSSSSSTTPSKFINPLPSSSSKTTTTITNSKRLSTLSKPSPITPITPT).

This is an uncharacterized protein from Dictyostelium discoideum (Social amoeba).